The sequence spans 366 residues: Probable cyclin-dependent kinase 10 (366 aa).

A Protein kinase domain is found at 7–293 (FEKLDSIGEG…ASDAIKHPFF (287 aa)). Residues 13-21 (IGEGTYGIV) and lysine 36 contribute to the ATP site. The Proton acceptor role is filled by aspartate 132. Low complexity predominate over residues 315–358 (FKNQNKKQNNNFNNFVQNNQTNQNNQTNQNNQTNQNNKTSQNNN). A disordered region spans residues 315–366 (FKNQNKKQNNNFNNFVQNNQTNQNNQTNQNNQTNQNNKTSQNNNMDSYKYSK).

This sequence belongs to the protein kinase superfamily. CMGC Ser/Thr protein kinase family. CDC2/CDKX subfamily.

It catalyses the reaction L-seryl-[protein] + ATP = O-phospho-L-seryl-[protein] + ADP + H(+). The enzyme catalyses L-threonyl-[protein] + ATP = O-phospho-L-threonyl-[protein] + ADP + H(+). The chain is Probable cyclin-dependent kinase 10 (cdk10) from Dictyostelium discoideum (Social amoeba).